A 395-amino-acid polypeptide reads, in one-letter code: Mevalonate kinase (395 aa).

ATP contacts are provided by residues Lys13, Asn55, Asn104, Ser135, and 140-146 (GAGLGSS). The active-site Proton donor is the Ser146. Residues Ser146 and Glu193 each coordinate Mg(2+). Catalysis depends on Asp204, which acts as the Proton acceptor.

The protein belongs to the GHMP kinase family. Mevalonate kinase subfamily. In terms of assembly, homodimer. Requires Mg(2+) as cofactor.

The protein localises to the cytoplasm. It localises to the peroxisome. It carries out the reaction (R)-mevalonate + ATP = (R)-5-phosphomevalonate + ADP + H(+). The protein operates within isoprenoid biosynthesis; isopentenyl diphosphate biosynthesis via mevalonate pathway; isopentenyl diphosphate from (R)-mevalonate: step 1/3. With respect to regulation, farnesyl pyrophosphate and geranyl pyrophosphate inhibit mevalonate kinase activity by binding competitively at the ATP-binding sites. In terms of biological role, catalyzes the phosphorylation of mevalonate to mevalonate 5-phosphate, a key step in isoprenoid and cholesterol biosynthesis. This Mus musculus (Mouse) protein is Mevalonate kinase.